The following is a 559-amino-acid chain: Non-homologous end joining factor IFFO1 (559 aa).

Positions 21 to 57 are disordered; it reads GPLGDSLGGDHFAGGGDLPPAPLSPAGPAAYSPPGPG. Residues 39-57 are compositionally biased toward pro residues; sequence PPAPLSPAGPAAYSPPGPG. The LMNA binding stretch occupies residues 65-116; the sequence is ALRNDLGSNINVLKTLNLRFRCFLAKVHELERRNRLLEKQLQQALEEGKQGR. An IF rod domain is found at 73 to 526; sequence NINVLKTLNL…RLITQSGDRK (454 aa). A coiled-coil region spans residues 85–117; sequence RCFLAKVHELERRNRLLEKQLQQALEEGKQGRR. The tract at residues 158 to 187 is disordered; sequence SPARSPAGPLAPSAASLSSSSTSTSTTYSS. Residues 237 to 301 are a coiled coil; it reads EIRALYNVLA…LKVEQLKAEL (65 aa). Positions 360–394 are disordered; it reads SMGGRKRERKAAVEEDTSLSESEGPRQPDGDEEES. The XCCR4 binding. Required for localization to the double-strand breaks (DSBs) stretch occupies residues 450–525; the sequence is EQEDSLEKVI…RRLITQSGDR (76 aa). The stretch at 455–501 forms a coiled coil; it reads LEKVIKDTESLFKTREKEYQETIDQIELELATAKNDMNRHLHEYMEM. Residues 520 to 559 are disordered; that stretch reads TQSGDRKSPAFTAVPLSDPPPPPSEAEDSDRDVSSDSSMR. The segment covering 550 to 559 has biased composition (basic and acidic residues); that stretch reads RDVSSDSSMR.

The protein belongs to the intermediate filament family. In terms of assembly, forms a heterotetramer with XRCC4. The interaction with XRCC4 is direct, involves LIG4-free XRCC4 and leads to relocalization of IFFO1 at the double-strand break (DSB) sites. Interacts with LMNA; the interaction forms an interior nucleoskeleton and the recruitment to DNA double-strand breaks. As to expression, ubiquitously expressed.

Its subcellular location is the nucleus. The protein localises to the nucleoplasm. It is found in the nucleus inner membrane. The protein resides in the nucleus matrix. Functionally, nuclear matrix protein involved in the immobilization of broken DNA ends and the suppression of chromosome translocation during DNA double-strand breaks (DSBs). Interacts with the nuclear lamina component LMNA, resulting in the formation of a nucleoskeleton that relocalizes to the DSB sites in a XRCC4-dependent manner and promotes the immobilization of the broken ends, thereby preventing chromosome translocation. Acts as a scaffold that allows the DNA repair protein XRCC4 and LMNA to assemble into a complex at the DSB sites. This chain is Non-homologous end joining factor IFFO1, found in Homo sapiens (Human).